The chain runs to 156 residues: Small ribosomal subunit protein uS7 (156 aa).

It belongs to the universal ribosomal protein uS7 family. As to quaternary structure, part of the 30S ribosomal subunit. Contacts proteins S9 and S11.

Functionally, one of the primary rRNA binding proteins, it binds directly to 16S rRNA where it nucleates assembly of the head domain of the 30S subunit. Is located at the subunit interface close to the decoding center, probably blocks exit of the E-site tRNA. This is Small ribosomal subunit protein uS7 from Natranaerobius thermophilus (strain ATCC BAA-1301 / DSM 18059 / JW/NM-WN-LF).